Here is a 512-residue protein sequence, read N- to C-terminus: Solute carrier family 40 member 2 (512 aa).

Positions methionine 1–serine 28 are disordered. Residues glutamine 17–proline 27 are compositionally biased toward acidic residues. A run of 11 helical transmembrane segments spans residues valine 55–valine 75, leucine 105–valine 125, phenylalanine 133–serine 153, glycine 187–valine 207, isoleucine 214–valine 234, isoleucine 310–leucine 330, tyrosine 343–tyrosine 363, glycine 376–valine 396, methionine 405–isoleucine 425, glycine 442–valine 462, and phenylalanine 468–isoleucine 488.

The protein belongs to the ferroportin (FP) (TC 2.A.100) family. SLC40A subfamily.

The protein localises to the vacuole membrane. Vacuolar transporter that is involved in the transport of excess nickel into the vacuole under iron deficiency, increasing cellular tolerance to nickel under iron deficiency stress response. The polypeptide is Solute carrier family 40 member 2 (IREG2) (Arabidopsis thaliana (Mouse-ear cress)).